We begin with the raw amino-acid sequence, 240 residues long: MTESHDTPITPDGEARPHRRIKSFVMRAGRMTEGQQRGLDQGGPLYILPLADSPVDYDQVFGRSAPRTLEIGFGMGHSLLEMAAAAPEQDFIGVEVHRPGVGALLNGVLTQGLKNLRVYDCDAIEVLNRCVADNSLDRLMLFFPDPWHKARHHKRRIVQLEFAELVRRKLKPGGVFHMATDWEPYAEYMLEVMSAAPGYRNRAADGTYVPRPEERPITKFERRGERLGHGVWDLKFEKVD.

Residues 1-20 form a disordered region; the sequence is MTESHDTPITPDGEARPHRR. Residues E70, E95, D122, and D145 each contribute to the S-adenosyl-L-methionine site. Residue D145 is part of the active site. Residues K149, D181, and 218–221 contribute to the substrate site; that span reads TKFE.

The protein belongs to the class I-like SAM-binding methyltransferase superfamily. TrmB family.

The enzyme catalyses guanosine(46) in tRNA + S-adenosyl-L-methionine = N(7)-methylguanosine(46) in tRNA + S-adenosyl-L-homocysteine. It participates in tRNA modification; N(7)-methylguanine-tRNA biosynthesis. Functionally, catalyzes the formation of N(7)-methylguanine at position 46 (m7G46) in tRNA. This Pseudomonas putida (strain ATCC 47054 / DSM 6125 / CFBP 8728 / NCIMB 11950 / KT2440) protein is tRNA (guanine-N(7)-)-methyltransferase.